Reading from the N-terminus, the 165-residue chain is Xanthine-guanine phosphoribosyltransferase (165 aa).

Residues Arg-41–Gly-42 and Asp-98–Thr-106 contribute to the 5-phospho-alpha-D-ribose 1-diphosphate site. Asp-99 is a Mg(2+) binding site. Asp-102 and Ile-145 together coordinate guanine. The xanthine site is built by Asp-102 and Ile-145. GMP is bound by residues Asp-102 to Thr-106 and Trp-144 to Ile-145.

It belongs to the purine/pyrimidine phosphoribosyltransferase family. XGPT subfamily. As to quaternary structure, homotetramer. Mg(2+) is required as a cofactor.

It localises to the cell inner membrane. It carries out the reaction GMP + diphosphate = guanine + 5-phospho-alpha-D-ribose 1-diphosphate. It catalyses the reaction XMP + diphosphate = xanthine + 5-phospho-alpha-D-ribose 1-diphosphate. The enzyme catalyses IMP + diphosphate = hypoxanthine + 5-phospho-alpha-D-ribose 1-diphosphate. It functions in the pathway purine metabolism; GMP biosynthesis via salvage pathway; GMP from guanine: step 1/1. It participates in purine metabolism; XMP biosynthesis via salvage pathway; XMP from xanthine: step 1/1. In terms of biological role, purine salvage pathway enzyme that catalyzes the transfer of the ribosyl-5-phosphate group from 5-phospho-alpha-D-ribose 1-diphosphate (PRPP) to the N9 position of the 6-oxopurines guanine and xanthine to form the corresponding ribonucleotides GMP (guanosine 5'-monophosphate) and XMP (xanthosine 5'-monophosphate), with the release of PPi. To a lesser extent, also acts on hypoxanthine. In Brucella canis (strain ATCC 23365 / NCTC 10854 / RM-666), this protein is Xanthine-guanine phosphoribosyltransferase.